The sequence spans 359 residues: GDSL esterase/lipase At2g30310 (359 aa).

Positions 1–28 (MSTSKTIVFGLFVATLLVSCNVAANATT) are cleaved as a signal peptide. Serine 41 acts as the Nucleophile in catalysis. N-linked (GlcNAc...) asparagine glycosylation is found at asparagine 103 and asparagine 325. Residues aspartate 333 and histidine 336 contribute to the active site.

This sequence belongs to the 'GDSL' lipolytic enzyme family.

The protein localises to the secreted. The polypeptide is GDSL esterase/lipase At2g30310 (Arabidopsis thaliana (Mouse-ear cress)).